A 329-amino-acid chain; its full sequence is Sex comb on midleg-like protein 1 (329 aa).

A phosphoserine mark is found at S138 and S238. The SAM domain maps to W258 to K325.

The protein belongs to the SCM family.

It localises to the nucleus. In terms of biological role, putative Polycomb group (PcG) protein. PcG proteins act by forming multiprotein complexes, which are required to maintain the transcriptionally repressive state of homeotic genes throughout development. May be involved in spermatogenesis during sexual maturation. The protein is Sex comb on midleg-like protein 1 (SCML1) of Hoolock hoolock (Western hoolock gibbon).